The primary structure comprises 909 residues: E3 ubiquitin-protein ligase HACE1 (909 aa).

The segment at 1–21 (MERAMEQLNRLTRSLRRARTV) is N-terminal helix important for homodimerization. ANK repeat units lie at residues 23–55 (LPED…NSKF), 64–93 (VKRS…NPNY), 97–126 (SGCT…DVNI), 130–159 (EGLT…DVDV), 163–192 (MGQT…DINR), 196–226 (SGAT…YLPD), and 228–253 (NGVT…QYHP). Residues 398 to 433 (QDQEAPSLSAFEPPGPGSYESLPPGPGDSKPEVLAG) form a disordered region. One can recognise an HECT domain in the interval 574-909 (NCAKLKQGIA…HCGSYGYTMA (336 aa)). The Glycyl thioester intermediate role is filled by Cys876.

As to quaternary structure, homodimer. The homodimer is autoinhibited and stabilized by its N-terminal helix. Interacts with RAB1 (RAB1A, RAB1B or RAB1C), RAB4 (RAB4A or RAB4B) and RAB11 (RAB11A or RAB11B); in a GTP-dependent manner. Interacts with the 26S proteasomal complex through the 20S core proteasomal subunit. Interacts with RARB. In terms of processing, autoubiquitinated.

The protein resides in the golgi apparatus. The protein localises to the golgi stack membrane. It is found in the cytoplasm. It localises to the endoplasmic reticulum. The enzyme catalyses S-ubiquitinyl-[E2 ubiquitin-conjugating enzyme]-L-cysteine + [acceptor protein]-L-lysine = [E2 ubiquitin-conjugating enzyme]-L-cysteine + N(6)-ubiquitinyl-[acceptor protein]-L-lysine.. It participates in protein modification; protein ubiquitination. Its activity is regulated as follows. Sterically autoinhibited in its dimeric state. Functionally, E3 ubiquitin-protein ligase involved in Golgi membrane fusion and regulation of small GTPases. Acts as a regulator of Golgi membrane dynamics during the cell cycle: recruited to Golgi membrane by Rab proteins and regulates postmitotic Golgi membrane fusion. Acts by mediating ubiquitination during mitotic Golgi disassembly, ubiquitination serving as a signal for Golgi reassembly later, after cell division. Specifically binds GTP-bound RAC1, mediating ubiquitination and subsequent degradation of active RAC1, thereby playing a role in host defense against pathogens. May also act as a transcription regulator via its interaction with RARB. The chain is E3 ubiquitin-protein ligase HACE1 (Hace1) from Mus musculus (Mouse).